Reading from the N-terminus, the 410-residue chain is Structural protein ORF142 (410 aa).

Disordered regions lie at residues 1-24 and 156-197; these read MNQN…HVDT and PTST…VNIS. The segment covering 161–188 has biased composition (acidic residues); that stretch reads DDNDNENRSDDDDDDDDYRNDREEVEDS.

The protein resides in the virion. This is Structural protein ORF142 from Trichoplusia ni ascovirus 2c (TnAV-2c).